The following is a 990-amino-acid chain: LPTLSHEAFGDIYLFEGELPNTLTTSNNNQLSLSKQHAKDGEQSLKWQYQPQATLTLNNIVNYQDDKNTATPLTFMMWIYNEKPQSSPLTLAFKQNNKIALSFNAELNFTGWRGIAVPFRDMQGSATGQLDQLVITAPNQAGTLFFDQIIMSVPLDNRWAVPDYQTPYVNNAVNTMVSKNWSALLMYDQMFQAHYPTLNFDTEFRDDQTEMASIYQRFEYYQGIRSDKKITPDMLDKHLALWEKLVLTQHADGSITGKALDHPNRQHFMKVEGVFSEGTQKALLDANMLRDVGKTLLQTAIYLRSDSLSATDRKKLEERYLLGTRYVLEQGFTRGSGYQIITHVGYQTRELFDAWFIGRHVLAKNNLLAPTQQAMMWYNATGRIFEKNNEIVDANVDILNTQLQWMIKSLLMLPDYQQRQQALAQLQSWLNKTILSSKGVAGGFKSDGSIFHHSQHYPAYAKDAFGGLAPSVYALSDSPFRLSTSAHERLKDVLLKMRIYTKETQIPVVLSGRHPTGLHKIGIAPFKWMALAGTPDGKQKLDTTLSAAYAKLDNKTHFEGINAESEPVGAWAMNYASMAIQRRASTQSPQQSWLAIARGFSRYLVGNESYENNNRYGRYLQYGQLEIIPADLTQSGFSHAGWDWNRYPGTTTIHLPYNELEAKLNQLPAAGIEEMLLSTESYSGANTLNNNSMFAMKLHGHSKYQQQSLRANKSYFLFDNRVIALGSGIENDDKQHTTETTLFQFAVPKLQSVIINGKKVNQLDTQLTLNNADTLIDPTGNLYKLTKGQTVKFSYQKQHSLDDRNSKPTEQLFATAVISHGKAPSNENYEYAIAIEAQNNKAPEYTVLQHNDQLHAVKDKITQEEGYAFFEATKLKSADATLLSSDAPVMVMAKIQNQQLTLSIVNPDLNLYQGREKDQFDDKGNQIEVSVYSRHWLTAESQSTNSTITVKGIWKLTTPQPGVIIKHHNNNTLITTTTIQATPTVINLVK.

Catalysis depends on His-453, which acts as the Proton acceptor. Tyr-460 serves as the catalytic Proton donor.

This sequence belongs to the polysaccharide lyase 8 family.

It carries out the reaction Exolytic removal of Delta(4)-unsaturated disaccharide residues from the non-reducing ends of both polymeric chondroitin/dermatan sulfates and their oligosaccharide fragments.. Its activity is regulated as follows. Inhibited by Zn(2+), whereas Ni(2+), Fe(2+), and Cu(2+) have little or no effect on activity. Functionally, broad-specificity glycosaminoglycan lyase, which acts in an exolytic fashion, and preferentially degrades the tetra- and hexasaccharide derivatives of chondroitin sulfate and dermatan sulfate produced by the chondroitin sulfate ABC endolyase, to yield the respective disaccharides. To a lesser extent, is also able to split off disaccharide residues directly from polymeric chondroitin 4- and 6-sulfate, dermatan sulfate, chondroitin, and hyaluronan. Is not active against keratan sulfate, heparan sulfate, and heparin. This chain is Chondroitin sulfate ABC exolyase (ChABCII), found in Proteus vulgaris.